Reading from the N-terminus, the 240-residue chain is Membrane-spanning 4-domains subfamily A member 15 (240 aa).

4 helical membrane-spanning segments follow: residues 73–93 (VLGT…SVLL), 100–120 (VGIF…FIIS), 144–164 (ILSV…FGVT), and 173–193 (LAVL…AMHF).

Belongs to the MS4A family.

The protein resides in the membrane. In terms of biological role, may be involved in signal transduction as a component of a multimeric receptor complex. The polypeptide is Membrane-spanning 4-domains subfamily A member 15 (MS4A15) (Homo sapiens (Human)).